A 288-amino-acid polypeptide reads, in one-letter code: Inorganic pyrophosphatase (288 aa).

R80 serves as a coordination point for diphosphate. The Mg(2+) site is built by D117, D122, and D154. The segment at 252–271 is disordered; that stretch reads TPSYSDAAAQEIPSASPAPA. Positions 258 to 271 are enriched in low complexity; that stretch reads AAAQEIPSASPAPA.

This sequence belongs to the PPase family. Requires Mg(2+) as cofactor.

It is found in the cytoplasm. It catalyses the reaction diphosphate + H2O = 2 phosphate + H(+). The chain is Inorganic pyrophosphatase (IPP1) from Candida albicans (strain SC5314 / ATCC MYA-2876) (Yeast).